A 259-amino-acid polypeptide reads, in one-letter code: Thiazole synthase (259 aa).

Lysine 95 (schiff-base intermediate with DXP) is an active-site residue. 1-deoxy-D-xylulose 5-phosphate-binding positions include glycine 156, 182-183, and 204-205; these read AG and AS.

This sequence belongs to the ThiG family. Homotetramer. Forms heterodimers with either ThiH or ThiS.

It is found in the cytoplasm. It carries out the reaction [ThiS sulfur-carrier protein]-C-terminal-Gly-aminoethanethioate + 2-iminoacetate + 1-deoxy-D-xylulose 5-phosphate = [ThiS sulfur-carrier protein]-C-terminal Gly-Gly + 2-[(2R,5Z)-2-carboxy-4-methylthiazol-5(2H)-ylidene]ethyl phosphate + 2 H2O + H(+). It participates in cofactor biosynthesis; thiamine diphosphate biosynthesis. In terms of biological role, catalyzes the rearrangement of 1-deoxy-D-xylulose 5-phosphate (DXP) to produce the thiazole phosphate moiety of thiamine. Sulfur is provided by the thiocarboxylate moiety of the carrier protein ThiS. In vitro, sulfur can be provided by H(2)S. The sequence is that of Thiazole synthase from Corynebacterium efficiens (strain DSM 44549 / YS-314 / AJ 12310 / JCM 11189 / NBRC 100395).